A 470-amino-acid polypeptide reads, in one-letter code: Uronate isomerase (470 aa).

It belongs to the metallo-dependent hydrolases superfamily. Uronate isomerase family.

The catalysed reaction is D-glucuronate = D-fructuronate. It catalyses the reaction aldehydo-D-galacturonate = keto-D-tagaturonate. The protein operates within carbohydrate metabolism; pentose and glucuronate interconversion. This Vibrio vulnificus (strain CMCP6) protein is Uronate isomerase.